Reading from the N-terminus, the 77-residue chain is Translation initiation factor IF-1, chloroplastic (77 aa).

In terms of domain architecture, S1-like spans 1–71 (MKEQKWIHEG…TRGRIIYRLR (71 aa)).

This sequence belongs to the IF-1 family. Component of the 30S ribosomal translation pre-initiation complex which assembles on the 30S ribosome in the order IF-2 and IF-3, IF-1 and N-formylmethionyl-tRNA(fMet); mRNA recruitment can occur at any time during PIC assembly.

It localises to the plastid. The protein localises to the chloroplast. One of the essential components for the initiation of protein synthesis. Stabilizes the binding of IF-2 and IF-3 on the 30S subunit to which N-formylmethionyl-tRNA(fMet) subsequently binds. Helps modulate mRNA selection, yielding the 30S pre-initiation complex (PIC). Upon addition of the 50S ribosomal subunit IF-1, IF-2 and IF-3 are released leaving the mature 70S translation initiation complex. This is Translation initiation factor IF-1, chloroplastic from Nandina domestica (Heavenly bamboo).